The following is a 192-amino-acid chain: VQ motif-containing protein 22 (192 aa).

A compositionally biased stretch (low complexity) spans 24 to 38 (ASTAVTTTTAGDTTS). The segment at 24-65 (ASTAVTTTTAGDTTSIDSRLSPETGRVTKPTRRRSRASRRTP) is disordered. Over residues 52–62 (KPTRRRSRASR) the composition is skewed to basic residues. The VQ signature appears at 76-85 (FRAMVQQYTG). 2 disordered regions span residues 101–135 (FSLTSSSDPSAGSSQQAPWQYNFQPHAPLQPPQRP) and 163–192 (FGTVDGSGGGGSAPSSKEATNSNSSSSRLQ). Low complexity-rich tracts occupy residues 102–114 (SLTSSSDPSAGSS) and 175–192 (APSSKEATNSNSSSSRLQ).

It is found in the nucleus. May function as positive regulator of plant growth. This Arabidopsis thaliana (Mouse-ear cress) protein is VQ motif-containing protein 22.